Here is a 110-residue protein sequence, read N- to C-terminus: MGQNDLVKTLRMNYLFDFYQSLLTNKQKNYLEFFYLQDYSLSEIADTFEVSRQAVYDNIRRTGDLVEDYESKLRLYQRFEKRRELYNLMKQSLNQPELLKQYITQLEELE.

This sequence belongs to the UPF0122 family.

Might take part in the signal recognition particle (SRP) pathway. This is inferred from the conservation of its genetic proximity to ftsY/ffh. May be a regulatory protein. In Staphylococcus epidermidis (strain ATCC 12228 / FDA PCI 1200), this protein is UPF0122 protein SE_0911.